The chain runs to 433 residues: Trigger factor (433 aa).

One can recognise a PPIase FKBP-type domain in the interval 161-246 (GKRVSIDFVG…VNKVEARELP (86 aa)).

The protein belongs to the FKBP-type PPIase family. Tig subfamily.

Its subcellular location is the cytoplasm. It carries out the reaction [protein]-peptidylproline (omega=180) = [protein]-peptidylproline (omega=0). Functionally, involved in protein export. Acts as a chaperone by maintaining the newly synthesized protein in an open conformation. Functions as a peptidyl-prolyl cis-trans isomerase. This chain is Trigger factor, found in Vibrio cholerae serotype O1 (strain ATCC 39541 / Classical Ogawa 395 / O395).